A 445-amino-acid polypeptide reads, in one-letter code: MVAIVEVKAREILDSRGNPTVEVDLKTEQGCFRAAVPSGASTGIYEALELRDGDKTRYNGKGVLKAVENVNKVLAPALVGKDCREQAALDRLMVEELDGSKNEWGWSKSVLGANAILAVSMALCRAGAAAKGIPLYKYVAQLAGHEAPEFVLPVPCFNVLNGGKHAGNSLAMQEFMVAPVGARSFGEALRMGAEVYQALQRLLKAKFGLAATNVGDEGGFAPDIKDPREALGLLVEAIRAAGHEGKVKIMADVAASEFYSKEAKSYDLDFKSPAADAHRLLTGDQLKDLFKEWSEEFPIVSIEDPFDQDDFSSYAALTAEIGSKVQVVGDDLLVTNPARIRKALQHKACNALLLKVNQIGSITEAIEACKLAQASGWGVMVSHRSGETEDSFIADLVVGLRTGQIKTGAPCRSERLCKYNQLLRIEEQLQGRCTYAGENFRNPSN.

Substrate-binding residues include His165 and Glu174. Catalysis depends on Glu217, which acts as the Proton donor. Mg(2+) is bound by residues Asp252, Glu303, and Asp330. Substrate-binding residues include Glu303 and Asp330. Residue Lys355 is the Proton acceptor of the active site. Substrate-binding positions include 382 to 385 (SHRS) and Lys406.

The protein belongs to the enolase family. As to quaternary structure, homodimer. The cofactor is Mg(2+).

Its subcellular location is the cytoplasm. The enzyme catalyses (2R)-2-phosphoglycerate = phosphoenolpyruvate + H2O. Its pathway is carbohydrate degradation; glycolysis; pyruvate from D-glyceraldehyde 3-phosphate: step 4/5. The sequence is that of Enolase (ENO) from Eimeria tenella (Coccidian parasite).